Consider the following 461-residue polypeptide: Phosphoglucosamine mutase (461 aa).

The active-site Phosphoserine intermediate is the S107. Mg(2+) is bound by residues S107, D254, D256, and D258. Residue S107 is modified to Phosphoserine.

This sequence belongs to the phosphohexose mutase family. Mg(2+) is required as a cofactor. In terms of processing, activated by phosphorylation.

The catalysed reaction is alpha-D-glucosamine 1-phosphate = D-glucosamine 6-phosphate. Catalyzes the conversion of glucosamine-6-phosphate to glucosamine-1-phosphate. This Bifidobacterium longum subsp. infantis (strain ATCC 15697 / DSM 20088 / JCM 1222 / NCTC 11817 / S12) protein is Phosphoglucosamine mutase.